Reading from the N-terminus, the 160-residue chain is S-ribosylhomocysteine lyase (160 aa).

Fe cation-binding residues include H57, H61, and C127.

The protein belongs to the LuxS family. In terms of assembly, homodimer. Fe cation is required as a cofactor.

The catalysed reaction is S-(5-deoxy-D-ribos-5-yl)-L-homocysteine = (S)-4,5-dihydroxypentane-2,3-dione + L-homocysteine. Functionally, involved in the synthesis of autoinducer 2 (AI-2) which is secreted by bacteria and is used to communicate both the cell density and the metabolic potential of the environment. The regulation of gene expression in response to changes in cell density is called quorum sensing. Catalyzes the transformation of S-ribosylhomocysteine (RHC) to homocysteine (HC) and 4,5-dihydroxy-2,3-pentadione (DPD). This chain is S-ribosylhomocysteine lyase, found in Streptococcus pneumoniae (strain CGSP14).